A 1463-amino-acid chain; its full sequence is DNA polymerase III PolC-type (1463 aa).

One can recognise an Exonuclease domain in the interval 425–581 (YVVFDVETTG…YDAEATGRLL (157 aa)).

Belongs to the DNA polymerase type-C family. PolC subfamily.

It is found in the cytoplasm. It catalyses the reaction DNA(n) + a 2'-deoxyribonucleoside 5'-triphosphate = DNA(n+1) + diphosphate. In terms of biological role, required for replicative DNA synthesis. This DNA polymerase also exhibits 3' to 5' exonuclease activity. This is DNA polymerase III PolC-type from Streptococcus suis (strain 98HAH33).